Consider the following 180-residue polypeptide: Large ribosomal subunit protein uL6 (180 aa).

The tract at residues 158 to 180 (YSGKGISYKGEKIRRKEGKTASK) is disordered.

This sequence belongs to the universal ribosomal protein uL6 family. As to quaternary structure, part of the 50S ribosomal subunit.

Its function is as follows. This protein binds to the 23S rRNA, and is important in its secondary structure. It is located near the subunit interface in the base of the L7/L12 stalk, and near the tRNA binding site of the peptidyltransferase center. The sequence is that of Large ribosomal subunit protein uL6 from Mycoplasmopsis synoviae (strain 53) (Mycoplasma synoviae).